A 433-amino-acid chain; its full sequence is Steroid hormone receptor ERR2 (433 aa).

The segment at M1–S38 is disordered. The span at D28–S38 shows a compositional bias: low complexity. The segment at Y93 to K211 is interaction with NANOG. The segment at residues K100–K186 is a DNA-binding region (nuclear receptor). 2 consecutive NR C4-type zinc fingers follow at residues C103–C123 and C139–C163. An essential for ESRRB transcriptional activity and interaction with NCOA3 region spans residues P203 to V433. The NR LBD domain occupies P208–K432.

The protein belongs to the nuclear hormone receptor family. NR3 subfamily. In terms of assembly, binds DNA as a monomer. Interacts with NR0B1; represses ESRRB activity at the GATA6 promoter. Interacts with NANOG; reciprocally modulates their transcriptional activities and activates POU5F1 expression. Interacts with NCOA3; mediates the interaction between ESRRB and RNA polymerase II complexes and allows NCOA3 corecruitment to ESRRB, KLF4, NANOG, and SOX2 enhancer regions to trigger ESRRB-dependent gene activation involved in self-renewal and pluripotency. Interacts with KDM1A; co-occupes the core set of ESRRB targets including ELF5 and EOMES. Interacts with the multiprotein complex Integrator, at least composed of INTS1, INTS2, INTS3, INTS4, INTS5, INTS6, INTS7, INTS8, INTS9/RC74, INTS10, INTS11/CPSF3L and INTS12; ESRRB is probably not a core component of the integrator complex and associates to integrator via its interaction with INTS1 and INTS9; attracts the transcriptional machinery. Interacts with JARID2. Interacts with POU5F1; recruits ESRRB near the POU5F1-SOX2 element in the NANOG proximal promoter leading to activation of NANOG expression; the interaction is DNA independent. Interacts with NFE2L2; represses NFE2L2 transcriptional activity. Isoform 1 interacts with ESR1. In terms of processing, acetylated by PCAF/KAT2 (in vitro).

It is found in the nucleus. Its subcellular location is the cytoplasm. It localises to the chromosome. Its function is as follows. Transcription factor that binds a canonical ESRRB recognition (ERRE) sequence 5'TCAAGGTCA-3' localized on promoter and enhancer of targets genes regulating their expression or their transcription activity. Plays a role, in a LIF-independent manner, in maintainance of self-renewal and pluripotency of embryonic and trophoblast stem cells through different signaling pathways including FGF signaling pathway and Wnt signaling pathways. Involved in morula development (2-16 cells embryos) by acting as a regulator at the 8-cell stage. Upon FGF signaling pathway activation, interacts with KDM1A by directly binding to enhancer site of ELF5 and EOMES and activating their transcription leading to self-renewal of trophoblast stem cells. Also regulates expression of multiple rod-specific genes and is required for survival of this cell type. Plays a role as transcription factor activator of GATA6, NR0B1, POU5F1 and PERM1. Plays a role as transcription factor repressor of NFE2L2 transcriptional activity and ESR1 transcriptional activity. During mitosis remains bound to a subset of interphase target genes, including pluripotency regulators, through the canonical ESRRB recognition (ERRE) sequence, leading to their transcriptional activation in early G1 phase. Can coassemble on structured DNA elements with other transcription factors like SOX2, POU5F1, KDM1A and NCOA3 to trigger ESRRB-dependent gene activation. This mechanism, in the case of SOX2 corecruitment prevents the embryonic stem cells (ESCs) to epiblast stem cells (EpiSC) transition through positive regulation of NR0B1 that inhibits the EpiSC transcriptional program. Also plays a role inner ear development by controlling expression of ion channels and transporters and in early placentation. Functionally, transcription factor that binds a canonical ESRRB recognition (ERRE) sequence 5'TCAAGGTCA-3' localized on promoter and enhancer of targets genes regulating their expression or their transcription activity. Positively regulates ESR1 transcriptional activity upon E2 stimulation. The polypeptide is Steroid hormone receptor ERR2 (Homo sapiens (Human)).